A 78-amino-acid polypeptide reads, in one-letter code: CDC42 small effector protein 1 (78 aa).

Residues cysteine 10 and cysteine 11 are each lipidated (S-palmitoyl cysteine). Residues 30 to 43 (IGEPMNFVHLTHIG) form the CRIB domain.

It belongs to the CDC42SE/SPEC family.

It localises to the cytoplasm. The protein resides in the cytoskeleton. The protein localises to the cell membrane. In terms of biological role, probably involved in the organization of the actin cytoskeleton by acting downstream of CDC42, inducing actin filament assembly. This chain is CDC42 small effector protein 1 (CDC42SE1), found in Gallus gallus (Chicken).